A 310-amino-acid chain; its full sequence is Acetylglutamate kinase (310 aa).

Substrate-binding positions include 79–80, R101, and N206; that span reads GG.

Belongs to the acetylglutamate kinase family. ArgB subfamily.

The protein resides in the cytoplasm. It carries out the reaction N-acetyl-L-glutamate + ATP = N-acetyl-L-glutamyl 5-phosphate + ADP. The protein operates within amino-acid biosynthesis; L-arginine biosynthesis; N(2)-acetyl-L-ornithine from L-glutamate: step 2/4. Catalyzes the ATP-dependent phosphorylation of N-acetyl-L-glutamate. The polypeptide is Acetylglutamate kinase (Rhodospirillum rubrum (strain ATCC 11170 / ATH 1.1.1 / DSM 467 / LMG 4362 / NCIMB 8255 / S1)).